The chain runs to 161 residues: ATP synthase subunit b (161 aa).

Residues 1–21 (MYLNATILGQVIAFILFVWFC) traverse the membrane as a helical segment.

The protein belongs to the ATPase B chain family. As to quaternary structure, F-type ATPases have 2 components, F(1) - the catalytic core - and F(0) - the membrane proton channel. F(1) has five subunits: alpha(3), beta(3), gamma(1), delta(1), epsilon(1). F(0) has three main subunits: a(1), b(2) and c(10-14). The alpha and beta chains form an alternating ring which encloses part of the gamma chain. F(1) is attached to F(0) by a central stalk formed by the gamma and epsilon chains, while a peripheral stalk is formed by the delta and b chains.

It is found in the cell inner membrane. F(1)F(0) ATP synthase produces ATP from ADP in the presence of a proton or sodium gradient. F-type ATPases consist of two structural domains, F(1) containing the extramembraneous catalytic core and F(0) containing the membrane proton channel, linked together by a central stalk and a peripheral stalk. During catalysis, ATP synthesis in the catalytic domain of F(1) is coupled via a rotary mechanism of the central stalk subunits to proton translocation. Its function is as follows. Component of the F(0) channel, it forms part of the peripheral stalk, linking F(1) to F(0). The polypeptide is ATP synthase subunit b (Blochmanniella floridana).